A 407-amino-acid chain; its full sequence is Probable endo-beta-1,4-glucanase celB (407 aa).

The N-terminal stretch at 1–18 is a signal peptide; it reads MALTLAATALVLLPLVTA. Asparagine 136 carries N-linked (GlcNAc...) asparagine glycosylation. Residue glutamate 216 is the Nucleophile of the active site. The active-site Proton donor is the glutamate 221.

This sequence belongs to the glycosyl hydrolase 7 (cellulase C) family.

It localises to the secreted. The enzyme catalyses Endohydrolysis of (1-&gt;4)-beta-D-glucosidic linkages in cellulose, lichenin and cereal beta-D-glucans.. Has endoglucanase activity on substrates containing beta-1,4 glycosidic bonds, like in carboxymethylcellulose (CMC), hydroxyethylcellulose (HEC) and beta-glucan. Involved in the degradation of complex natural cellulosic substrates. The chain is Probable endo-beta-1,4-glucanase celB (celB) from Neosartorya fischeri (strain ATCC 1020 / DSM 3700 / CBS 544.65 / FGSC A1164 / JCM 1740 / NRRL 181 / WB 181) (Aspergillus fischerianus).